The chain runs to 506 residues: Lysine--tRNA ligase (506 aa).

Glu416 and Glu423 together coordinate Mg(2+).

It belongs to the class-II aminoacyl-tRNA synthetase family. As to quaternary structure, homodimer. It depends on Mg(2+) as a cofactor.

The protein resides in the cytoplasm. It carries out the reaction tRNA(Lys) + L-lysine + ATP = L-lysyl-tRNA(Lys) + AMP + diphosphate. In Xylella fastidiosa (strain M23), this protein is Lysine--tRNA ligase.